We begin with the raw amino-acid sequence, 390 residues long: Altered inheritance of mitochondria protein 6 (390 aa).

The signal sequence occupies residues 1-26; the sequence is MLGLKGCLTILIGYVIAVCALFSSRG.

This sequence belongs to the AIM6 family.

The polypeptide is Altered inheritance of mitochondria protein 6 (AIM6) (Saccharomyces cerevisiae (strain RM11-1a) (Baker's yeast)).